The following is a 133-amino-acid chain: Salivary cystatin-L2 (133 aa).

The N-terminal stretch at 1 to 18 (MTSSLALVLLLGGAAVCA) is a signal peptide. In terms of domain architecture, Cystatin spans 34 to 118 (DDPKYLELAH…RTCTAVIYEN (85 aa)).

This sequence belongs to the cystatin family. Salivary gland, midgut and other tissues.

The protein resides in the secreted. In terms of biological role, inhibitor of cysteine proteinases. Inhibits host cathepsin L (CTSL) and S (CTSS). Modulates production of various cytokines and chemokines in lipopolysaccharide (LPS)-stimulated mouse dendritic cell. Suppresses maturation of mouse bone-marrow-derived dendritic cells (BMDCs). (Microbial infection) Modulates Borrelia miyamotoi-stimulated immune responses in mice by suppressing activities of host dendritic and T-cells. The polypeptide is Salivary cystatin-L2 (Ixodes persulcatus (Taiga tick)).